Consider the following 200-residue polypeptide: uncharacterized protein (200 aa).

Positions 3–119 constitute a Response regulatory domain; sequence RLFIAEDQRM…DLADAIRKCV (117 aa). Aspartate 54 bears the 4-aspartylphosphate mark. Positions 133-198 constitute an HTH luxR-type domain; it reads MMRDENPLTV…EAASIAEEKG (66 aa). Residues 157 to 176 constitute a DNA-binding region (H-T-H motif); the sequence is TKDITLELYLSQGTVRNYIS.

Post-translationally, phosphorylated by YvfT.

It localises to the cytoplasm. In terms of biological role, member of the two-component regulatory system YvfT/YvfU. This is an uncharacterized protein from Bacillus subtilis (strain 168).